Consider the following 116-residue polypeptide: Large ribosomal subunit protein uL24 (116 aa).

The protein belongs to the universal ribosomal protein uL24 family. As to quaternary structure, part of the 50S ribosomal subunit.

In terms of biological role, one of two assembly initiator proteins, it binds directly to the 5'-end of the 23S rRNA, where it nucleates assembly of the 50S subunit. Functionally, located at the polypeptide exit tunnel on the outside of the subunit. This chain is Large ribosomal subunit protein uL24, found in Methanothrix thermoacetophila (strain DSM 6194 / JCM 14653 / NBRC 101360 / PT) (Methanosaeta thermophila).